The following is a 992-amino-acid chain: MQTRPSSEPHRSRDQVTDGDRNRDQPQKCASATLAKKPVTPPAAPPPTPSNRVVAPLTVPVIQLTPAQSDSPVKLARPATPKETAISVPDHSNKENQPARTPPPSKSCPLGAPTNYVARRTWITTERMNELRRKAQEAAKQNKIFTIRGCFNSVRNALLMRGWVEKLDVHRKVMPAGQMTYEDLTQRLPKRKAGETRRQYVQKCERNIMSRFLEHMPVDFLWTNRKEKCDYIDQAKNPGMTINKFHRAPFTSKEGLCSQLRDFHWFFEEGTAEMYFPRCYNVWSPEELGEFIENFKLTACVAFLRAMLCKYHKQGSDAVFSCSGKIPYSAIDFAYKRLVEYIDSCQHNDIDFEDPPKIWEHDWDAFLFQHQQLVNEDGRIQHDGGQRLEPMVKSCLSLVDKMKVHWPQYSLDGYQNMWIVKPANKCRGRGIILMDNLKKILGVVNLSIASKSRYVVQKYIERPLILFQTKFDIRQWFLITNTQPLVVWFYRESYLRFSSQEYSLSNHHESVHLTNYAIQKKYTNGKRDKRLPSENMWDCYSFQAYLRQIGKYNMWLERIFPGMRKAIVGCMLASQENMDRRPNTFELFGADFMICENFYPWLIEINSSPDLGATTSVTARMCPQCLEDVVKVVIDRRTDPKAELGNFELAYRQVVPPTPAYMGLNLFVKGKQVLQKANHGGGHGHYYYQQQRKERSLATSSVYRQRSAIIHPATSISRIHRAMPTFNATEYMEKYMVEPLSSSRSSLCSQLPQKSPSAAPALTATPSGATSSYILKQAGRSITQLLSATHKRNTGGSLSGEQVQSTALPPKRQRSCGPRLSSTNPVESTEKKFKILIKNYSSNGNENMQDARPEVANSATATAISERKWRSLRNIAATAGGSSNLAARSKGPPLIAPPSLPTRRLTRTKSEIDSTGMHAIGRTFGRKSNGPRLPISISVQALHRGEPIVAALKQATSELQLSQAQMMSPRTALANKLNGSTLMVPASALPVG.

Disordered regions lie at residues 1–54 (MQTR…NRVV) and 68–113 (QSDS…LGAP). Positions 7–26 (SEPHRSRDQVTDGDRNRDQP) are enriched in basic and acidic residues. Residues 39–49 (VTPPAAPPPTP) show a composition bias toward pro residues. Residues 295-645 (FKLTACVAFL…RRTDPKAELG (351 aa)) form the TTL domain. ATP is bound by residues 457–460 (QKYI), Lys470, and Asp472. Disordered stretches follow at residues 746 to 766 (SLCS…TATP) and 791 to 828 (KRNT…PVES). Residues 794–807 (TGGSLSGEQVQSTA) show a composition bias toward polar residues.

The protein localises to the cytoplasm. The protein resides in the cytoskeleton. Polylycylase which modifies alpha- and beta-tubulin, generating side chains of glycine on the gamma-carboxyl groups of specific glutamate residues within the C-terminal tail of alpha- and beta-tubulin. Involved both in the side-chain initiation and elongation steps of the polyglycylation reaction by adding a single glycine chain to generate monoglycine side chains and by elongating monoglycine side chains to polyglycine side chains. The polypeptide is Tubulin glycylase 3A (TTLL3A) (Drosophila melanogaster (Fruit fly)).